A 628-amino-acid polypeptide reads, in one-letter code: MRLTSGIFHAAIAVAAVGAVLPEGPSSSKTHRNEYARRMLGSSFGIPKNQTFDYLVIGGGTAGLTIATRLAEQGVGSVAVIEAGGFYELNNGNLSQIPAQDAFYVGTDLDDWQPGIDWGFHTTPQAGAYDRVSHYARGKCLGGSSARNYMAYQRGTKAAHQRWADTVGDSSYTWEQFLPFFEKSLHFTPANDALRGANASVVSDPSVLGNGDGPLSVTYPHYAQAFATWAKHAFIEIGLQIRSGFQSGALLGQSYGLYTINATTMHRESSETSFLRKGLADPNLTVFQSALAKRIRFQDKRAVGVDVETMGRAYTLSARKEIVLSAGAFQSPQLLMVSGVGPAATLKAHNIPLVADRPGVGQNMQDHIIYAPSYRVNVITQSALLNEEFEAQANRDYNERAAGIYANPTSDILAWEKIPEPKRSAWFSNHTRQVLAEYPDDWPEVEFLTMGGYFGYQRNYIRDNPSDGYNYASLAVSLCTPRSRGNVTITSPDAGVPPVINPNWLTDPVDVELAVAAFKRTRDFFNTTAIKPILIGPEYFPGSQVATDAEILDHVRKSFDTIFHASCTCAMGLANDTQAVVDSKARVIGVEALRVVDASALPFLPPGHPQSTLYALAEKIACEISGNC.

A signal peptide spans 1 to 19 (MRLTSGIFHAAIAVAAVGA). N-linked (GlcNAc...) asparagine glycosylation occurs at Asn49. Residues 61 to 62 (TA) and 82 to 83 (EA) each bind FAD. Asn93 carries N-linked (GlcNAc...) asparagine glycosylation. 148–151 (NYMA) is a binding site for FAD. 6 N-linked (GlcNAc...) asparagine glycosylation sites follow: Asn198, Asn261, Asn283, Asn429, Asn486, and Asn526. The active-site Proton acceptor is the His564. The N-linked (GlcNAc...) asparagine glycan is linked to Asn575. FAD is bound by residues Ala598 and 609–610 (PQ).

This sequence belongs to the GMC oxidoreductase family. The cofactor is FAD.

The protein resides in the cytoplasm. Its subcellular location is the cell cortex. It localises to the vacuole. It is found in the secreted. The protein localises to the cell wall. The enzyme catalyses (E)-ascladiol + A = patulin + AH2. It participates in mycotoxin biosynthesis; patulin biosynthesis. Patulin synthase; part of the gene cluster that mediates the biosynthesis of patulin, an acetate-derived tetraketide mycotoxin produced by several fungal species that shows antimicrobial properties against several bacteria. PatE catalyzes the last step of the pathway which is the conversion of E-ascladiol to patulin. The pathway begins with the synthesis of 6-methylsalicylic acid by the polyketide synthase (PKS) patK via condensation of acetate and malonate units. The 6-methylsalicylic acid decarboxylase patG then catalyzes the decarboxylation of 6-methylsalicylic acid to yield m-cresol (also known as 3-methylphenol). These first reactions occur in the cytosol. The intermediate m-cresol is then transported into the endoplasmic reticulum where the cytochrome P450 monooxygenase patH converts it to m-hydroxybenzyl alcohol, which is further converted to gentisyl alcohol by the cytochrome P450 monooxygenase patI. The oxidoreductases patJ and patO further convert gentisyl alcohol to isoepoxydon in the vacuole. PatN catalyzes then the transformation of isoepoxydon into phyllostine. The cluster protein patF is responsible for the conversion from phyllostine to neopatulin whereas the alcohol dehydrogenase patD converts neopatulin to E-ascladiol. The steps between isoepoxydon and E-ascladiol occur in the cytosol, and E-ascladiol is probably secreted to the extracellular space by one of the cluster-specific transporters patC or patM. Finally, the secreted patulin synthase patE catalyzes the conversion of E-ascladiol to patulin. The protein is Patulin synthase of Penicillium expansum (Blue mold rot fungus).